A 274-amino-acid polypeptide reads, in one-letter code: Nitrogenase iron protein (274 aa).

Position 8-15 (8-15 (GKGGIGKS)) interacts with ATP. Cys-94 contributes to the [4Fe-4S] cluster binding site. ADP-ribosylarginine; by dinitrogenase reductase ADP-ribosyltransferase is present on Arg-97. Cys-131 contacts [4Fe-4S] cluster.

Belongs to the NifH/BchL/ChlL family. In terms of assembly, homodimer. It depends on [4Fe-4S] cluster as a cofactor. Post-translationally, the reversible ADP-ribosylation of Arg-97 inactivates the nitrogenase reductase and regulates nitrogenase activity.

It catalyses the reaction N2 + 8 reduced [2Fe-2S]-[ferredoxin] + 16 ATP + 16 H2O = H2 + 8 oxidized [2Fe-2S]-[ferredoxin] + 2 NH4(+) + 16 ADP + 16 phosphate + 6 H(+). Its function is as follows. The key enzymatic reactions in nitrogen fixation are catalyzed by the nitrogenase complex, which has 2 components: the iron protein and the molybdenum-iron protein. This Chlorobium phaeovibrioides (strain DSM 265 / 1930) (Prosthecochloris vibrioformis (strain DSM 265)) protein is Nitrogenase iron protein.